Consider the following 667-residue polypeptide: Receptor for retinol uptake STRA6 (667 aa).

Positions 1-13 (MSSQPAGNQTSPG) are enriched in polar residues. Positions 1-20 (MSSQPAGNQTSPGATEDYSY) are disordered. Residues 1–50 (MSSQPAGNQTSPGATEDYSYGSWYIDEPQGGEELQPEGEVPSCHTSIPPG) are Extracellular-facing. Asn8 is a glycosylation site (N-linked (GlcNAc...) asparagine). The helical transmembrane segment at 51–71 (LYHACLASLSILVLLLLAMLV) threads the bilayer. The Cytoplasmic portion of the chain corresponds to 72-100 (RRRQLWPDCVRGRPGLPSPVDFLAGDRPR). A helical transmembrane segment spans residues 101–121 (AVPAAVFMVLLSSLCLLLPDE). The Extracellular portion of the chain corresponds to 122–144 (DALPFLTLASAPSQDGKTEAPRG). The helical transmembrane segment at 145–165 (AWKILGLFYYAALYYPLAACA) threads the bilayer. Residues 166 to 168 (TAG) are Cytoplasmic-facing. Residues 169-189 (HTAAHLLGSTLSWAHLGVQVW) form a helical membrane-spanning segment. The Extracellular portion of the chain corresponds to 190 to 205 (QRAECPQVPKIYKYYS). Residues 206-226 (LLASLPLLLGLGFLSLWYPVQ) form a helical membrane-spanning segment. Topologically, residues 227-295 (LVRSFSRRTG…PQPGFHLPLK (69 aa)) are cytoplasmic. Residues 235 to 293 (TGAGSKGLQSSYSEEYLRNLLCRKKLGSSYHTSKHGFLSWARVCLRHCIYTPQPGFHLP) form an interaction with RBP1 region. Residues 296–316 (LVLSATLTGTAIYQVALLLLV) traverse the membrane as a helical segment. The Extracellular portion of the chain corresponds to 317 to 367 (GVVPTIQKVRAGVTTDVSYLLAGFGIVLSEDKQEVVELVKHHLWALEVCYI). A helical transmembrane segment spans residues 368-388 (SALVLSCLLTFLVLMRSLVTH). Residues 389-422 (RTNLRALHRGAALDLSPLHRSPHPSRQAIFCWMS) lie on the Cytoplasmic side of the membrane. A helical membrane pass occupies residues 423-443 (FSAYQTAFICLGLLVQQIIFF). Topologically, residues 444–473 (LGTTALAFLVLMPVLHGRNLLLFRSLESSW) are extracellular. The helical transmembrane segment at 474-494 (PFWLTLALAVILQNMAAHWVF) threads the bilayer. Residues 495 to 509 (LETHDGHPQLTNRRV) are Cytoplasmic-facing. The helical intramembrane region spans 510–547 (LYAATFLLFPLNVLVGAMVATWRVLLSALYNAIHLGQM). Topologically, residues 548–667 (DLSLLPPRAA…ALLGANGAQP (120 aa)) are cytoplasmic. Tyr643 is subject to Phosphotyrosine.

Homodimer. Interacts with JAK2 and STAT5. Interacts (via extracellular domains) with RBP4. Interacts (via cytoplasmic domains) with RBP1. Phosphorylated on tyrosine residues in response to RBP4 binding. Phosphorylation requires the presence of LRAT, suggesting it may be triggered by the uptake of retinol that is then metabolized within the cell to retinoids that function as signaling molecules. As to expression, broad expression. In adult eye expressed in sclera, retina, retinal pigment epithelium, and trabecular meshwork but not in choroid and iris.

It localises to the cell membrane. Functionally, functions as a retinol transporter. Accepts all-trans retinol from the extracellular retinol-binding protein RBP4, facilitates retinol transport across the cell membrane, and then transfers retinol to the cytoplasmic retinol-binding protein RBP1. Retinol uptake is enhanced by LRAT, an enzyme that converts retinol to all-trans retinyl esters, the storage forms of vitamin A. Contributes to the activation of a signaling cascade that depends on retinol transport and LRAT-dependent generation of retinol metabolites that then trigger activation of JAK2 and its target STAT5, and ultimately increase the expression of SOCS3 and inhibit cellular responses to insulin. Important for the homeostasis of vitamin A and its derivatives, such as retinoic acid. STRA6-mediated transport is particularly important in the eye, and under conditions of dietary vitamin A deficiency. Does not transport retinoic acid. The protein is Receptor for retinol uptake STRA6 (STRA6) of Homo sapiens (Human).